Consider the following 327-residue polypeptide: Phenylalanine--tRNA ligase alpha subunit (327 aa).

Glu252 contributes to the Mg(2+) binding site.

This sequence belongs to the class-II aminoacyl-tRNA synthetase family. Phe-tRNA synthetase alpha subunit type 1 subfamily. As to quaternary structure, tetramer of two alpha and two beta subunits. Mg(2+) serves as cofactor.

The protein resides in the cytoplasm. It catalyses the reaction tRNA(Phe) + L-phenylalanine + ATP = L-phenylalanyl-tRNA(Phe) + AMP + diphosphate + H(+). The protein is Phenylalanine--tRNA ligase alpha subunit of Yersinia pseudotuberculosis serotype O:1b (strain IP 31758).